Here is a 707-residue protein sequence, read N- to C-terminus: Polyribonucleotide nucleotidyltransferase (707 aa).

Asp485 and Asp491 together coordinate Mg(2+). The 60-residue stretch at 552-611 (PRIYTMKIDPKKIKDVIGKGGATIRTLTEETGTSIDIDDDGTVKIAAIDGNAVKEVMARI) folds into the KH domain. Positions 621–689 (GAVYTGKVTR…RQGRIRLTMK (69 aa)) constitute an S1 motif domain.

Belongs to the polyribonucleotide nucleotidyltransferase family. Component of the RNA degradosome, which is a multiprotein complex involved in RNA processing and mRNA degradation. Mg(2+) serves as cofactor.

Its subcellular location is the cytoplasm. It catalyses the reaction RNA(n+1) + phosphate = RNA(n) + a ribonucleoside 5'-diphosphate. Its function is as follows. Involved in mRNA degradation. Catalyzes the phosphorolysis of single-stranded polyribonucleotides processively in the 3'- to 5'-direction. This chain is Polyribonucleotide nucleotidyltransferase, found in Actinobacillus succinogenes (strain ATCC 55618 / DSM 22257 / CCUG 43843 / 130Z).